The sequence spans 567 residues: DNA ligase B (567 aa).

Lys132 functions as the N6-AMP-lysine intermediate in the catalytic mechanism.

It belongs to the NAD-dependent DNA ligase family. LigB subfamily.

It catalyses the reaction NAD(+) + (deoxyribonucleotide)n-3'-hydroxyl + 5'-phospho-(deoxyribonucleotide)m = (deoxyribonucleotide)n+m + AMP + beta-nicotinamide D-nucleotide.. Catalyzes the formation of phosphodiester linkages between 5'-phosphoryl and 3'-hydroxyl groups in double-stranded DNA using NAD as a coenzyme and as the energy source for the reaction. This chain is DNA ligase B, found in Yersinia pestis.